Consider the following 344-residue polypeptide: Succinylglutamate desuccinylase (344 aa).

Zn(2+)-binding residues include histidine 63, glutamate 66, and histidine 160. Residue glutamate 224 is part of the active site.

The protein belongs to the AspA/AstE family. Succinylglutamate desuccinylase subfamily. The cofactor is Zn(2+).

It carries out the reaction N-succinyl-L-glutamate + H2O = L-glutamate + succinate. Its pathway is amino-acid degradation; L-arginine degradation via AST pathway; L-glutamate and succinate from L-arginine: step 5/5. In terms of biological role, transforms N(2)-succinylglutamate into succinate and glutamate. The chain is Succinylglutamate desuccinylase from Shewanella putrefaciens (strain CN-32 / ATCC BAA-453).